A 200-amino-acid polypeptide reads, in one-letter code: Systemin (200 aa).

The tract at residues 1 to 33 is disordered; sequence MGTPSYDIKNKGDDMQEEPKVKLHHEKGGDEKE. 2 consecutive propeptides follow at residues 1-178 and 197-200; these read MGTP…REDL and NNKL. Residues 3 to 8 form a 1; truncated repeat; the sequence is TPSYDI. Basic and acidic residues predominate over residues 8 to 33; sequence IKNKGDDMQEEPKVKLHHEKGGDEKE. Tandem repeats lie at residues 37–45, 80–88, 117–125, and 145–153. Disordered regions lie at residues 106-159 and 178-200; these read EEEE…MEGE and LAVQSKPPSKRDPPKMQTDNNKL. Composition is skewed to basic and acidic residues over residues 111 to 140 and 146 to 158; these read EKEKIVEKETPSQDINNKGDDAQEKPKVEH and KETPSQDIIKMEG.

In terms of tissue distribution, all organs except the roots. Transported out of wounds to distal tissues.

The protein resides in the cytoplasm. Activates a lipid-based signal transduction pathway in which linolenic acid is converted to jasmonic acid, a potent activator of defense gene transcription, including proteinase inhibitor. This is Systemin from Solanum lycopersicum (Tomato).